We begin with the raw amino-acid sequence, 111 residues long: 4'-hydroxy-3'-methoxypropiophenone carrier protein ppsC (111 aa).

Residues 1-21 form a disordered region; sequence MSAQVMRPGTPQHEGQEFLSG.

It functions in the pathway secondary metabolite biosynthesis. Functionally, 4'-hydroxy-3'-methoxypropiophenone carrier protein; part of the gene cluster that mediates the biosynthesis of 2,4'-dihydroxy-3'-methoxypropiophenone. The first step of the pathway is the conversion of acetate into acetyl-CoA by the acyl-CoA ligase ppsA. Acetyl-CoA is then used as a starter unit by the polyketide synthase ppsB and condensed with 4 malonyl-CoA unit to produce the pentaketide backbone. During polyketide extension, the polykedite chain is probably reduced and dehydrated by the KR and PT domains, respectively. O-methylation seems to be catalyzed by an unknown methyltransferase rather than by the CMeT domain of ppsB. Two hydroxylations and one further decarboxylation step catalyzed by yet unknown enzymes are then required to yield 4'-hydroxy-3'-methoxypropiophenone. PpsC functions as a carrier protein to transport 4'-hydroxy-3'-methoxypropiophenone to a specific cell compartment in which 4'-hydroxy-3'-methoxypropiophenone is hydroxylated to 2,4'-dihydroxy-3'-methoxypropiophenone by a still to be identified enzyme. In Aspergillus oryzae (strain ATCC 42149 / RIB 40) (Yellow koji mold), this protein is 4'-hydroxy-3'-methoxypropiophenone carrier protein ppsC.